The following is a 1165-amino-acid chain: DNA-directed RNA polymerase III subunit RPC2 (1165 aa).

Positions 1 to 21 are disordered; the sequence is MGVNTAGDPQKSQPKINKGGI. Residues Cys-1111, Cys-1114, Cys-1123, and Cys-1126 each contribute to the Zn(2+) site. The C4-type zinc finger occupies 1111–1126; sequence CGQCGLLGYKGWCNSC.

This sequence belongs to the RNA polymerase beta chain family. As to quaternary structure, component of the RNA polymerase III (Pol III) complex consisting of 17 subunits.

The protein localises to the nucleus. It catalyses the reaction RNA(n) + a ribonucleoside 5'-triphosphate = RNA(n+1) + diphosphate. In terms of biological role, DNA-dependent RNA polymerase catalyzes the transcription of DNA into RNA using the four ribonucleoside triphosphates as substrates. Second largest core component of RNA polymerase III which synthesizes small RNAs, such as 5S rRNA and tRNAs. Proposed to contribute to the polymerase catalytic activity and forms the polymerase active center together with the largest subunit. Pol III is composed of mobile elements and RPC2 is part of the core element with the central large cleft and probably a clamp element that moves to open and close the cleft. In Schizosaccharomyces pombe (strain 972 / ATCC 24843) (Fission yeast), this protein is DNA-directed RNA polymerase III subunit RPC2 (rpc2).